The following is a 601-amino-acid chain: Elongation factor 4 (601 aa).

The tr-type G domain occupies 5–187 (DKIRNFSIIA…SIVKDLPAPQ (183 aa)). Residues 17–22 (DHGKST) and 134–137 (NKVD) contribute to the GTP site.

It belongs to the TRAFAC class translation factor GTPase superfamily. Classic translation factor GTPase family. LepA subfamily.

The protein localises to the cell inner membrane. It carries out the reaction GTP + H2O = GDP + phosphate + H(+). In terms of biological role, required for accurate and efficient protein synthesis under certain stress conditions. May act as a fidelity factor of the translation reaction, by catalyzing a one-codon backward translocation of tRNAs on improperly translocated ribosomes. Back-translocation proceeds from a post-translocation (POST) complex to a pre-translocation (PRE) complex, thus giving elongation factor G a second chance to translocate the tRNAs correctly. Binds to ribosomes in a GTP-dependent manner. This chain is Elongation factor 4, found in Maridesulfovibrio salexigens (strain ATCC 14822 / DSM 2638 / NCIMB 8403 / VKM B-1763) (Desulfovibrio salexigens).